Consider the following 122-residue polypeptide: ATP-dependent Clp protease adapter protein ClpS (122 aa).

A disordered region spans residues 1 to 27 (MVRMATKPPSMTPTPPTGAPPRDDGGS). Residues 10-19 (SMTPTPPTGA) are compositionally biased toward pro residues.

The protein belongs to the ClpS family. Binds to the N-terminal domain of the chaperone ClpA.

Involved in the modulation of the specificity of the ClpAP-mediated ATP-dependent protein degradation. This is ATP-dependent Clp protease adapter protein ClpS from Paracidovorax citrulli (strain AAC00-1) (Acidovorax citrulli).